Consider the following 487-residue polypeptide: UDP-glucosyl transferase 73CC6 (487 aa).

Catalysis depends on H17, which acts as the Proton acceptor. Residue D114 is the Charge relay of the active site. UDP is bound by residues S282, W346, A347, H364, N368, S369, E372, and Y386.

It belongs to the UDP-glycosyltransferase family. Mainly expressed in flowers and flower buds and, to a lesser extent, in leaves, stems and roots.

It functions in the pathway secondary metabolite biosynthesis; terpenoid biosynthesis. Functionally, component of the oleanane-type triterpene saponins (e.g. saponarioside A and saponarioside B) biosynthetic pathway, leading to the production of natural products with detergent properties used as traditional sources of soap. A glycosyltransferase that mediates the conversion of QA-di to QA-tri via the elongation of the C-3 sugar chain with a D-xylose. The polypeptide is UDP-glucosyl transferase 73CC6 (Saponaria officinalis (Common soapwort)).